The sequence spans 2131 residues: Protein Ycf2 (2131 aa).

1466–1473 (GSIGTGRS) contacts ATP.

The protein belongs to the Ycf2 family.

The protein resides in the plastid. It is found in the chloroplast stroma. In terms of biological role, probable ATPase of unknown function. Its presence in a non-photosynthetic plant (Epifagus virginiana) and experiments in tobacco indicate that it has an essential function which is probably not related to photosynthesis. This is Protein Ycf2 from Helianthus annuus (Common sunflower).